A 362-amino-acid polypeptide reads, in one-letter code: Methylthioribose-1-phosphate isomerase (362 aa).

Substrate-binding positions include 53–55 (RGA), Arg-90, and Gln-201. Catalysis depends on Asp-241, which acts as the Proton donor. Residue 251–252 (NK) coordinates substrate.

It belongs to the eIF-2B alpha/beta/delta subunits family. MtnA subfamily.

The enzyme catalyses 5-(methylsulfanyl)-alpha-D-ribose 1-phosphate = 5-(methylsulfanyl)-D-ribulose 1-phosphate. It functions in the pathway amino-acid biosynthesis; L-methionine biosynthesis via salvage pathway; L-methionine from S-methyl-5-thio-alpha-D-ribose 1-phosphate: step 1/6. Its function is as follows. Catalyzes the interconversion of methylthioribose-1-phosphate (MTR-1-P) into methylthioribulose-1-phosphate (MTRu-1-P). The polypeptide is Methylthioribose-1-phosphate isomerase (Dechloromonas aromatica (strain RCB)).